The primary structure comprises 363 residues: Outer membrane porin F (363 aa).

A signal peptide spans 1–22 (MMKRKILAAVIPALLAAATANA). A beta stranded membrane pass occupies residues 23–28 (AEIYNK). Position 29 (Asp-29) is a topological domain, periplasmic. The beta stranded transmembrane segment at 30–45 (GNKLDLYGKAVGRHVW) threads the bilayer. Residues 46–56 (TTTGDSKNADQ) lie on the Extracellular side of the membrane. The beta stranded transmembrane segment at 57–69 (TYAQIGFKGETQI) threads the bilayer. Residues 70–71 (NT) lie on the Periplasmic side of the membrane. The beta stranded transmembrane segment at 72 to 84 (DLTGFGQWEYRTK) threads the bilayer. The Extracellular segment spans residues 85–99 (ADRAEGEQQNSNLVR). A beta stranded transmembrane segment spans residues 100 to 108 (LAFAGLKYA). Glu-109 is a topological domain (periplasmic). A beta stranded transmembrane segment spans residues 110 to 117 (VGSIDYGR). Residues 118 to 154 (NYGIVYDVESYTDMAPYFSGETWGGAYTDNYMTSRAG) are Extracellular-facing. The beta stranded transmembrane segment at 155 to 161 (GLLTYRN) threads the bilayer. Over 162–169 (SDFFGLVD) the chain is Periplasmic. A beta stranded membrane pass occupies residues 170 to 181 (GLSFGIQYQGKN). Over 182 to 192 (QDNHSINSQNG) the chain is Extracellular. Residues 193–203 (DGVGYTMAYEF) traverse the membrane as a beta stranded segment. Residue Asp-204 is a topological domain, periplasmic. A beta stranded transmembrane segment spans residues 205–217 (GFGVTAAYSNSKR). The Extracellular segment spans residues 218–230 (TNDQQDRDGNGDR). The chain crosses the membrane as a beta stranded span at residues 231–242 (AESWAVGAKYDA). Residue Asn-243 is a topological domain, periplasmic. Residues 244–256 (NVYLAAVYAETRN) traverse the membrane as a beta stranded segment. The Extracellular portion of the chain corresponds to 257-272 (MSIVENTVTDTVEMAN). The beta stranded transmembrane segment at 273–285 (KTQNLEVVAQYQF) threads the bilayer. The Periplasmic portion of the chain corresponds to 286 to 287 (DF). The chain crosses the membrane as a beta stranded span at residues 288 to 301 (GLRPAISYVQSKGK). Topologically, residues 302-312 (QLNGADGSADL) are extracellular. Residues 313–324 (AKYIQAGATYYF) traverse the membrane as a beta stranded segment. Over 325 to 326 (NK) the chain is Periplasmic. A beta stranded transmembrane segment spans residues 327–336 (NMNVWVDYRF). The Extracellular segment spans residues 337 to 353 (NLLDENDYSSSYVGTDD). Residues 354 to 363 (QAAVGITYQF) traverse the membrane as a beta stranded segment.

The protein belongs to the Gram-negative porin family. In terms of assembly, homotrimer. Forms mixed heterotrimers with OmpC and with PhoE; other mixed heterotrimers with other porins are also probable.

It is found in the cell outer membrane. Forms pores that allow passive diffusion of small molecules across the outer membrane. This chain is Outer membrane porin F (ompF), found in Salmonella typhi.